The chain runs to 415 residues: Serine hydroxymethyltransferase (415 aa).

(6S)-5,6,7,8-tetrahydrofolate is bound by residues leucine 117 and 121-123 (GHL). The residue at position 226 (lysine 226) is an N6-(pyridoxal phosphate)lysine.

This sequence belongs to the SHMT family. In terms of assembly, homodimer. Pyridoxal 5'-phosphate serves as cofactor.

It is found in the cytoplasm. It catalyses the reaction (6R)-5,10-methylene-5,6,7,8-tetrahydrofolate + glycine + H2O = (6S)-5,6,7,8-tetrahydrofolate + L-serine. Its pathway is one-carbon metabolism; tetrahydrofolate interconversion. The protein operates within amino-acid biosynthesis; glycine biosynthesis; glycine from L-serine: step 1/1. Its function is as follows. Catalyzes the reversible interconversion of serine and glycine with tetrahydrofolate (THF) serving as the one-carbon carrier. This reaction serves as the major source of one-carbon groups required for the biosynthesis of purines, thymidylate, methionine, and other important biomolecules. Also exhibits THF-independent aldolase activity toward beta-hydroxyamino acids, producing glycine and aldehydes, via a retro-aldol mechanism. This Leptospira borgpetersenii serovar Hardjo-bovis (strain JB197) protein is Serine hydroxymethyltransferase.